The following is a 310-amino-acid chain: Vomeronasal type-1 receptor 97 (310 aa).

Residues 1–19 are Extracellular-facing; sequence MNKDNILHTDTNIKITLFS. The chain crosses the membrane as a helical span at residues 20–40; the sequence is EVSIGISANSALFFSHLFMLF. Residues 41 to 49 lie on the Cytoplasmic side of the membrane; sequence EKNRSKPID. A helical transmembrane segment spans residues 50 to 70; the sequence is LYIAFLSLTQLMLLITIGLIA. Residues 71–93 lie on the Extracellular side of the membrane; it reads ADMFMSRGRWDSTTCQSLIYLHR. A disulfide bond links Cys-85 and Cys-172. Residues 94–114 traverse the membrane as a helical segment; that stretch reads LLRGFTLCATCLLNVLWTITL. Residues 115-131 are Cytoplasmic-facing; it reads SPRSSCLTTFKHKSPHH. Residues 132–152 traverse the membrane as a helical segment; that stretch reads ISGAFLFFCVLYISFGSHLFL. Over 153-190 the chain is Extracellular; sequence STIATPNLTSDNFMYVTQSCSFLPMSYSRTSMFSTPMA. Asn-159 carries N-linked (GlcNAc...) asparagine glycosylation. A helical transmembrane segment spans residues 191-211; sequence IREALLIGLIGLSSGYMVAFL. Residues 212–238 are Cytoplasmic-facing; it reads WRHKNQARHLHSTSLSSKVSPEQRATR. The chain crosses the membrane as a helical span at residues 239–259; it reads TIMILMSFFVVLYILENVVFY. At 260–269 the chain is on the extracellular side; sequence SRMTFKDGSM. A helical membrane pass occupies residues 270–290; sequence FYCVQIIVSHSYATISPFVFI. The Cytoplasmic segment spans residues 291 to 310; sequence CTEKRIIKLWGSMSSRIVSI.

It belongs to the G-protein coupled receptor 1 family. As to expression, expressed in 1-4% of neurons of the vomeronasal organ. Only one pheromone receptor gene may be expressed in a particular neuron. Not expressed in the main olfactory epithelium.

It localises to the cell membrane. In terms of biological role, putative pheromone receptor implicated in the regulation of social as well as reproductive behavior. The sequence is that of Vomeronasal type-1 receptor 97 (Vom1r97) from Rattus norvegicus (Rat).